Here is a 604-residue protein sequence, read N- to C-terminus: Serine/threonine-protein kinase A-Raf (604 aa).

The region spanning 19-91 (GTVKVYLPNK…DGEELIVEVL (73 aa)) is the RBD domain. The Phorbol-ester/DAG-type zinc finger occupies 98-144 (MHNFVRKTFFSLAFCDFCLKFLFHGFRCQTCGYKFHQHCSSKVPTVC). 8 residues coordinate Zn(2+): His-99, Cys-112, Cys-115, Cys-125, Cys-128, His-133, Cys-136, and Cys-144. 2 positions are modified to phosphoserine: Ser-157 and Ser-162. Disordered regions lie at residues 177–222 (NELL…HMVS) and 241–288 (TDAA…EKKK). The residue at position 181 (Thr-181) is a Phosphothreonine. At Ser-186 the chain carries Phosphoserine. Positions 210–222 (IRSTSTPNVHMVS) are enriched in polar residues. Low complexity predominate over residues 252 to 265 (PRGSPSPASVSSGR). A phosphoserine mark is found at Ser-255 and Ser-267. Positions 272–287 (LPSEQRERKSLADEKK) are enriched in basic and acidic residues. Residues 308-568 (VQLLKRIGTG…PQILATIELL (261 aa)) form the Protein kinase domain. Residues 314 to 322 (IGTGSFGTV) and Lys-334 each bind ATP. Residue Thr-316 is modified to Phosphothreonine. The active-site Proton acceptor is the Asp-427.

Belongs to the protein kinase superfamily. TKL Ser/Thr protein kinase family. RAF subfamily. In terms of assembly, interacts with TH1L/NELFD. Requires Zn(2+) as cofactor. Post-translationally, dephosphorylation by the SHOC2-MRAS-PP1c (SMP) complex consisting of SHOC2, GTP-bound M-Ras/MRAS and the catalytic subunit of protein phosphatase 1 (PPP1CA, PPP1CB or PPP1CC); this relieves inactivation and stimulates kinase activity.

The enzyme catalyses L-seryl-[protein] + ATP = O-phospho-L-seryl-[protein] + ADP + H(+). The catalysed reaction is L-threonyl-[protein] + ATP = O-phospho-L-threonyl-[protein] + ADP + H(+). Functionally, involved in the transduction of mitogenic signals from the cell membrane to the nucleus. May also regulate the TOR signaling cascade. Phosphorylates PFKFB2. In Mus musculus (Mouse), this protein is Serine/threonine-protein kinase A-Raf (Araf).